An 835-amino-acid polypeptide reads, in one-letter code: uncharacterized protein (835 aa).

This is an uncharacterized protein from Mycoplasma genitalium (strain ATCC 33530 / DSM 19775 / NCTC 10195 / G37) (Mycoplasmoides genitalium).